We begin with the raw amino-acid sequence, 210 residues long: Outer-membrane lipoprotein LolB (210 aa).

An N-terminal signal peptide occupies residues 1 to 18 (MKKFTKILSLSTLLFLAG). Cys19 carries the N-palmitoyl cysteine lipid modification. A lipid anchor (S-diacylglycerol cysteine) is attached at Cys19.

It belongs to the LolB family. In terms of assembly, monomer.

The protein localises to the cell outer membrane. In terms of biological role, plays a critical role in the incorporation of lipoproteins in the outer membrane after they are released by the LolA protein. The chain is Outer-membrane lipoprotein LolB from Actinobacillus pleuropneumoniae serotype 7 (strain AP76).